The chain runs to 954 residues: uncharacterized protein (954 aa).

An N-terminal signal peptide occupies residues 1–35 (MKILFNNTFELFCLFVFVTWALFLNNNGILYPVHC). Residues 381–415 (KNKISSARDDIQKDINKMESELINVSNEINRLDIV) are a coiled coil. Positions 733 to 765 (NIRNDNNNNNNNNNNNSNNNNNNNNNNKDNSVA) are disordered. Positions 736–763 (NDNNNNNNNNNNNSNNNNNNNNNNKDNS) are enriched in low complexity.

This is an uncharacterized protein from Plasmodium falciparum (isolate 3D7).